The primary structure comprises 859 residues: Bifunctional heparan sulfate N-deacetylase/N-sulfotransferase 1 (859 aa).

Over 1–13 the chain is Cytoplasmic; the sequence is MIITPYLNPRLVK. A helical; Signal-anchor for type II membrane protein membrane pass occupies residues 14-34; it reads PLKWLAIIILLYFLYFSLFSI. A heparan sulfate N-deacetylase 1 region spans residues 34-575; the sequence is INKKPGKPRK…PRHQAILPPS (542 aa). Topologically, residues 35–859 are lumenal; the sequence is NKKPGKPRKP…WLEEAVRIRV (825 aa). Asn-50, Asn-74, Asn-210, Asn-262, Asn-378, and Asn-429 each carry an N-linked (GlcNAc...) asparagine glycan. Positions 576-859 are heparan sulfate N-sulfotransferase 1; it reads MSCSKKSLPD…WLEEAVRIRV (284 aa). Residue Lys-593 is the For sulfotransferase activity of the active site. 593–597 is a binding site for 3'-phosphoadenylyl sulfate; the sequence is KTGST. Residues Asn-608 and Asn-643 are each glycosylated (N-linked (GlcNAc...) asparagine). Residue Ser-687 coordinates 3'-phosphoadenylyl sulfate. The N-linked (GlcNAc...) asparagine glycan is linked to Asn-715. The cysteines at positions 796 and 805 are disulfide-linked. 3'-phosphoadenylyl sulfate is bound at residue 810–814; it reads KGRKY.

Belongs to the sulfotransferase 1 family. NDST subfamily. As to quaternary structure, monomer.

It is found in the golgi apparatus membrane. The catalysed reaction is alpha-D-glucosaminyl-[heparan sulfate](n) + 3'-phosphoadenylyl sulfate = N-sulfo-alpha-D-glucosaminyl-[heparan sulfate](n) + adenosine 3',5'-bisphosphate + 2 H(+). It functions in the pathway glycan metabolism; heparan sulfate biosynthesis. Its pathway is glycan metabolism; heparin biosynthesis. Functionally, essential bifunctional enzyme that catalyzes both the N-deacetylation and the N-sulfation of glucosamine (GlcNAc) of the glycosaminoglycan in heparan sulfate. Modifies the GlcNAc-GlcA disaccharide repeating sugar backbone to make N-sulfated heparosan, a prerequisite substrate for later modifications in heparin biosynthesis. This Caenorhabditis briggsae protein is Bifunctional heparan sulfate N-deacetylase/N-sulfotransferase 1 (hst-1).